We begin with the raw amino-acid sequence, 226 residues long: uncharacterized protein (226 aa).

This is an uncharacterized protein from Methanocaldococcus jannaschii (strain ATCC 43067 / DSM 2661 / JAL-1 / JCM 10045 / NBRC 100440) (Methanococcus jannaschii).